We begin with the raw amino-acid sequence, 245 residues long: Polyhedrin (245 aa).

Belongs to the polyhedrin family.

Its function is as follows. Major component of the virus occlusion bodies, which are large proteinaceous structures (polyhedra), that protect the virus from the outside environment for extended periods until they are ingested by insect larvae. This chain is Polyhedrin (PH), found in Lepidoptera (butterflies and moths).